A 181-amino-acid polypeptide reads, in one-letter code: Large ribosomal subunit protein bL17 (181 aa).

The tract at residues 129–181 is disordered; sequence AEKSEKSAKTAKAAKAPAKKATAKKASTKAVAAKKKAVKKAQKKDRAASAARA. A compositionally biased stretch (basic residues) spans 145–171; that stretch reads PAKKATAKKASTKAVAAKKKAVKKAQK.

It belongs to the bacterial ribosomal protein bL17 family. In terms of assembly, part of the 50S ribosomal subunit. Contacts protein L32.

This is Large ribosomal subunit protein bL17 from Bdellovibrio bacteriovorus (strain ATCC 15356 / DSM 50701 / NCIMB 9529 / HD100).